We begin with the raw amino-acid sequence, 2548 residues long: Unconventional myosin-IXa (2548 aa).

The region spanning 14-112 is the Ras-associating domain; the sequence is NEHTLRIYPG…YRFLLREKNL (99 aa). In terms of domain architecture, Myosin motor spans 146–1016; that stretch reads KDFDDLCSLP…ERQHLQDLLH (871 aa). A helical transmembrane segment spans residues 175–195; the sequence is IYTYVGSILIVINPFKFLPIY. An ATP-binding site is contributed by 239–246; that stretch reads GESGSGKT. S755 bears the Phosphoserine mark. Positions 898–920 are actin-binding; the sequence is LSKLMETLGQAEPYFVKCIRSNA. 5 consecutive IQ domains span residues 1021-1041, 1042-1071, 1074-1103, 1115-1144, and 1138-1167; these read RRII…HFLH, LRQA…QKDA, MASA…AAIV, RHMA…KIIL, and QRKK…QRLR. The interval 1021-1162 is neck or regulatory domain; it reads RRIILLQRWF…RARQRFKALK (142 aa). The segment at 1163 to 2511 is tail; the sequence is EQRLRETKPE…LKNVKNSPQK (1349 aa). Positions 1223–1236 are enriched in basic and acidic residues; the sequence is SVDCLKESPNKQQE. The interval 1223 to 1250 is disordered; the sequence is SVDCLKESPNKQQERAQSQSGVDLQEDV. Phosphoserine occurs at positions 1242 and 1258. Positions 1264–1291 form a coiled coil; it reads QKKVGRAKRESRRMRELEQAIFSLELLK. Phosphoserine occurs at positions 1299 and 1317. The disordered stretch occupies residues 1299 to 1386; that stretch reads SPSEDRRWST…SNETSSAEHL (88 aa). Composition is skewed to low complexity over residues 1324–1337 and 1356–1366; these read SESS…LSYE and FPSPKISSSPK. At S1364 the chain carries Phosphoserine. The segment covering 1372–1381 has biased composition (polar residues); that stretch reads NALSASNETS. A coiled-coil region spans residues 1486-1532; sequence VLKKLEKLNTEKEERQKQLQQQNEKEMMEQIRQQTDILEKERKAFKT. Residues 1804–1836 form a disordered region; sequence YHPTPPLSPELPGSCRKEFKENKEPSPKAKRKR. Over residues 1818 to 1830 the composition is skewed to basic and acidic residues; it reads CRKEFKENKEPSP. Position 1948 is a phosphoserine (S1948). Phorbol-ester/DAG-type zinc fingers lie at residues 1999 to 2048 and 2068 to 2119; these read GHIF…TAKC and LTSE…DAES. A Rho-GAP domain is found at 2063-2251; sequence VELSRLTSED…LIVVEQMNKY (189 aa). A Phosphoserine modification is found at S2294. Residues 2315–2358 adopt a coiled-coil conformation; sequence AAMETDITEQQQAAMQQEERVLTEQIENLQKEKEELTFEMLVLE. Disordered regions lie at residues 2359-2383 and 2401-2424; these read PRAS…ENLN and SSLK…KQQD. S2464 bears the Phosphoserine mark. The disordered stretch occupies residues 2490 to 2531; the sequence is RGTFNPEKGKQKLKNVKNSPQKTKETPEGTVMSGRRKTVDPD.

Belongs to the TRAFAC class myosin-kinesin ATPase superfamily. Myosin family. Post-translationally, phosphorylated by ALPK1 following monosodium urate monohydrate (MSU)-induced inflammation. As to expression, found to be expressed in testis and placenta and at lower levels in all the examined tissues with the exception of liver. Isoform 5: Found in leukocytes but not in brain, retina or testis.

It localises to the membrane. The protein localises to the cytoplasm. It is found in the synapse. Its subcellular location is the cell projection. The protein resides in the growth cone. Myosins are actin-based motor molecules with ATPase activity. Unconventional myosins serve in intracellular movements. Regulates Rho by stimulating it's GTPase activity in neurons. Required for the regulation of neurite branching and motor neuron axon guidance. The chain is Unconventional myosin-IXa (MYO9A) from Homo sapiens (Human).